The chain runs to 415 residues: MSILETFDPQVAEAIRHETERQEYNLELIASENFVSEAVLEAQGSVMTNKYAEGYPGKRYYGGCHHVDVVENLAIERAKELFGADHANVQPHSGSQANMAVYFSVLKPGDTILGMNLSHGGHLTHGSPVNFSGRFFNVVPYGVSQETETIDFNEVERLALEHKPKMIVVGASAYPRTIDFAAFRIIADKVGAVIMVDMAHIAGLVAAGLHPSPVPYAEFVTTTTHKTLRGPRGGMILCREEYAKTLNSNIFPGIQGGPLMHVIAAKAVALKEALQPEFKAYQAQIVKNAKALADELVKRGFRLVSGGTDNHLMLVNLTGTELTGKVAEESLDKAGITVNKNTVPFETRSPFVTSGFRIGTPAATTHGLKEAEMADVAGFIAEALANVDNDAKLAEIKGRVNVLMKRFPLYAHRLS.

Residues Leu-117 and 121-123 (GHL) each bind (6S)-5,6,7,8-tetrahydrofolate. Lys-226 carries the N6-(pyridoxal phosphate)lysine modification. (6S)-5,6,7,8-tetrahydrofolate is bound by residues Glu-241 and 349-351 (SPF).

Belongs to the SHMT family. In terms of assembly, homodimer. It depends on pyridoxal 5'-phosphate as a cofactor.

The protein localises to the cytoplasm. It catalyses the reaction (6R)-5,10-methylene-5,6,7,8-tetrahydrofolate + glycine + H2O = (6S)-5,6,7,8-tetrahydrofolate + L-serine. It participates in one-carbon metabolism; tetrahydrofolate interconversion. The protein operates within amino-acid biosynthesis; glycine biosynthesis; glycine from L-serine: step 1/1. In terms of biological role, catalyzes the reversible interconversion of serine and glycine with tetrahydrofolate (THF) serving as the one-carbon carrier. This reaction serves as the major source of one-carbon groups required for the biosynthesis of purines, thymidylate, methionine, and other important biomolecules. Also exhibits THF-independent aldolase activity toward beta-hydroxyamino acids, producing glycine and aldehydes, via a retro-aldol mechanism. The sequence is that of Serine hydroxymethyltransferase from Geobacter sulfurreducens (strain ATCC 51573 / DSM 12127 / PCA).